The chain runs to 455 residues: tRNA-2-methylthio-N(6)-dimethylallyladenosine synthase (455 aa).

In terms of domain architecture, MTTase N-terminal spans 18–136 (KLFFIQTYGC…FPEYLNRVKT (119 aa)). [4Fe-4S] cluster is bound by residues C27, C63, C97, C173, C177, and C180. Positions 159–389 (RKSDIKGFVT…VEIVNTGIAK (231 aa)) constitute a Radical SAM core domain. Positions 392–455 (KDAEGKIYEV…SFSLIGEVEK (64 aa)) constitute a TRAM domain.

This sequence belongs to the methylthiotransferase family. MiaB subfamily. As to quaternary structure, monomer. It depends on [4Fe-4S] cluster as a cofactor.

It is found in the cytoplasm. It carries out the reaction N(6)-dimethylallyladenosine(37) in tRNA + (sulfur carrier)-SH + AH2 + 2 S-adenosyl-L-methionine = 2-methylsulfanyl-N(6)-dimethylallyladenosine(37) in tRNA + (sulfur carrier)-H + 5'-deoxyadenosine + L-methionine + A + S-adenosyl-L-homocysteine + 2 H(+). Its function is as follows. Catalyzes the methylthiolation of N6-(dimethylallyl)adenosine (i(6)A), leading to the formation of 2-methylthio-N6-(dimethylallyl)adenosine (ms(2)i(6)A) at position 37 in tRNAs that read codons beginning with uridine. The chain is tRNA-2-methylthio-N(6)-dimethylallyladenosine synthase from Clostridium beijerinckii (strain ATCC 51743 / NCIMB 8052) (Clostridium acetobutylicum).